The chain runs to 791 residues: Phosphoenolpyruvate synthase (791 aa).

Threonine 416 is subject to Phosphothreonine. Histidine 418 acts as the Tele-phosphohistidine intermediate in catalysis. 7 residues coordinate substrate: arginine 508, arginine 575, glutamate 677, glycine 698, serine 699, asparagine 700, and aspartate 701. Glutamate 677 is a binding site for Mg(2+). Aspartate 701 lines the Mg(2+) pocket. Tyrosine 744 carries the post-translational modification Phosphotyrosine. Catalysis depends on cysteine 748, which acts as the Proton donor.

Belongs to the PEP-utilizing enzyme family. Mg(2+) is required as a cofactor.

It carries out the reaction pyruvate + ATP + H2O = phosphoenolpyruvate + AMP + phosphate + 2 H(+). It participates in carbohydrate biosynthesis; gluconeogenesis. In terms of biological role, catalyzes the phosphorylation of pyruvate to phosphoenolpyruvate. The sequence is that of Phosphoenolpyruvate synthase (ppsA) from Pseudomonas aeruginosa (strain UCBPP-PA14).